The chain runs to 260 residues: 3'-5' ssDNA/RNA exonuclease TatD (260 aa).

Positions 92, 128, and 153 each coordinate a divalent metal cation.

Belongs to the metallo-dependent hydrolases superfamily. TatD-type hydrolase family. TatD subfamily. Monomer. The cofactor is Mg(2+).

Its subcellular location is the cytoplasm. Functionally, 3'-5' exonuclease that prefers single-stranded DNA and RNA. May play a role in the H(2)O(2)-induced DNA damage repair. This chain is 3'-5' ssDNA/RNA exonuclease TatD, found in Pectobacterium parmentieri (strain WPP163) (Pectobacterium wasabiae (strain WPP163)).